The following is a 124-amino-acid chain: Small ribosomal subunit protein uS12 (124 aa).

Positions 1–24 are disordered; it reads MPTINQLVRRPRKPSVSANKAPAL. The residue at position 90 (Asp90) is a 3-methylthioaspartic acid.

It belongs to the universal ribosomal protein uS12 family. Part of the 30S ribosomal subunit. Contacts proteins S8 and S17. May interact with IF1 in the 30S initiation complex.

In terms of biological role, with S4 and S5 plays an important role in translational accuracy. Its function is as follows. Interacts with and stabilizes bases of the 16S rRNA that are involved in tRNA selection in the A site and with the mRNA backbone. Located at the interface of the 30S and 50S subunits, it traverses the body of the 30S subunit contacting proteins on the other side and probably holding the rRNA structure together. The combined cluster of proteins S8, S12 and S17 appears to hold together the shoulder and platform of the 30S subunit. The protein is Small ribosomal subunit protein uS12 of Anaplasma phagocytophilum (strain HZ).